A 514-amino-acid chain; its full sequence is RNA polymerase sigma factor SigA (514 aa).

A compositionally biased stretch (basic residues) spans 135-159 (AAKKATAKKAAAKKTTAKKTAAKKS). The segment at 135–205 (AAKKATAKKA…SDDDEDDAPA (71 aa)) is disordered. The sigma-70 factor domain-2 stretch occupies residues 281-351 (LLEANLRLVV…TRAMADQART (71 aa)). The Interaction with polymerase core subunit RpoC signature appears at 305–308 (DLIQ). A sigma-70 factor domain-3 region spans residues 360–436 (EVINKLARVQ…DSEAVVPADA (77 aa)). The segment at 449-502 (VLDTLSEREAGVVSMRFGLTDGQPKTLDEIGKVYGVTRERIRQIESKTMSKLRH) is sigma-70 factor domain-4. The H-T-H motif DNA-binding region spans 475 to 494 (LDEIGKVYGVTRERIRQIES).

Belongs to the sigma-70 factor family. RpoD/SigA subfamily. Interacts transiently with the RNA polymerase catalytic core.

Its subcellular location is the cytoplasm. In terms of biological role, sigma factors are initiation factors that promote the attachment of RNA polymerase to specific initiation sites and are then released. This sigma factor is the primary sigma factor during exponential growth. In Streptomyces griseus, this protein is RNA polymerase sigma factor SigA.